Reading from the N-terminus, the 122-residue chain is Large ribosomal subunit protein uL14 (122 aa).

It belongs to the universal ribosomal protein uL14 family. Part of the 50S ribosomal subunit. Forms a cluster with proteins L3 and L19. In the 70S ribosome, L14 and L19 interact and together make contacts with the 16S rRNA in bridges B5 and B8.

Its function is as follows. Binds to 23S rRNA. Forms part of two intersubunit bridges in the 70S ribosome. The chain is Large ribosomal subunit protein uL14 from Shewanella denitrificans (strain OS217 / ATCC BAA-1090 / DSM 15013).